The primary structure comprises 237 residues: 1-(5-phosphoribosyl)-5-[(5-phosphoribosylamino)methylideneamino] imidazole-4-carboxamide isomerase (237 aa).

Aspartate 8 serves as the catalytic Proton acceptor. The Proton donor role is filled by aspartate 129.

The protein belongs to the HisA/HisF family.

Its subcellular location is the cytoplasm. The catalysed reaction is 1-(5-phospho-beta-D-ribosyl)-5-[(5-phospho-beta-D-ribosylamino)methylideneamino]imidazole-4-carboxamide = 5-[(5-phospho-1-deoxy-D-ribulos-1-ylimino)methylamino]-1-(5-phospho-beta-D-ribosyl)imidazole-4-carboxamide. It participates in amino-acid biosynthesis; L-histidine biosynthesis; L-histidine from 5-phospho-alpha-D-ribose 1-diphosphate: step 4/9. This chain is 1-(5-phosphoribosyl)-5-[(5-phosphoribosylamino)methylideneamino] imidazole-4-carboxamide isomerase, found in Methanosphaera stadtmanae (strain ATCC 43021 / DSM 3091 / JCM 11832 / MCB-3).